We begin with the raw amino-acid sequence, 303 residues long: Probable serine acetyltransferase 1 (303 aa).

Disordered regions lie at residues 1 to 36 and 271 to 290; these read MTAG…ESDA and NPAR…ESMD.

The protein belongs to the transferase hexapeptide repeat family. Homomultimer.

The enzyme catalyses L-serine + acetyl-CoA = O-acetyl-L-serine + CoA. It functions in the pathway amino-acid biosynthesis; L-cysteine biosynthesis; L-cysteine from L-serine: step 1/2. The chain is Probable serine acetyltransferase 1 (SAT1) from Oryza sativa subsp. japonica (Rice).